Here is a 386-residue protein sequence, read N- to C-terminus: Probable dual-specificity RNA methyltransferase RlmN (386 aa).

The Proton acceptor role is filled by Glu123. One can recognise a Radical SAM core domain in the interval 129 to 372 (YPTRTTLCIS…ATLRDTRGQD (244 aa)). A disulfide bond links Cys136 and Cys377. [4Fe-4S] cluster contacts are provided by Cys143, Cys147, and Cys150. S-adenosyl-L-methionine-binding positions include 198–199 (GE), Ser232, 255–257 (SLH), and Asn334. Residue Cys377 is the S-methylcysteine intermediate of the active site.

Belongs to the radical SAM superfamily. RlmN family. [4Fe-4S] cluster is required as a cofactor.

The protein localises to the cytoplasm. The catalysed reaction is adenosine(2503) in 23S rRNA + 2 reduced [2Fe-2S]-[ferredoxin] + 2 S-adenosyl-L-methionine = 2-methyladenosine(2503) in 23S rRNA + 5'-deoxyadenosine + L-methionine + 2 oxidized [2Fe-2S]-[ferredoxin] + S-adenosyl-L-homocysteine. It carries out the reaction adenosine(37) in tRNA + 2 reduced [2Fe-2S]-[ferredoxin] + 2 S-adenosyl-L-methionine = 2-methyladenosine(37) in tRNA + 5'-deoxyadenosine + L-methionine + 2 oxidized [2Fe-2S]-[ferredoxin] + S-adenosyl-L-homocysteine. Its function is as follows. Specifically methylates position 2 of adenine 2503 in 23S rRNA and position 2 of adenine 37 in tRNAs. This Bifidobacterium adolescentis (strain ATCC 15703 / DSM 20083 / NCTC 11814 / E194a) protein is Probable dual-specificity RNA methyltransferase RlmN.